The following is a 971-amino-acid chain: uncharacterized protein (971 aa).

This is an uncharacterized protein from Caenorhabditis elegans.